We begin with the raw amino-acid sequence, 101 residues long: Small ribosomal subunit protein uS14 (101 aa).

The protein belongs to the universal ribosomal protein uS14 family. In terms of assembly, part of the 30S ribosomal subunit. Contacts proteins S3 and S10.

Its function is as follows. Binds 16S rRNA, required for the assembly of 30S particles and may also be responsible for determining the conformation of the 16S rRNA at the A site. The sequence is that of Small ribosomal subunit protein uS14 from Paramagnetospirillum magneticum (strain ATCC 700264 / AMB-1) (Magnetospirillum magneticum).